We begin with the raw amino-acid sequence, 397 residues long: tRNA-specific 2-thiouridylase MnmA (397 aa).

ATP-binding positions include Ala-6–Ser-13 and Leu-32. Cys-101 functions as the Nucleophile in the catalytic mechanism. An intrachain disulfide couples Cys-101 to Cys-199. ATP is bound at residue Gly-125. The interaction with tRNA stretch occupies residues Lys-148 to Gln-150. Residue Cys-199 is the Cysteine persulfide intermediate of the active site.

The protein belongs to the MnmA/TRMU family.

Its subcellular location is the cytoplasm. It carries out the reaction S-sulfanyl-L-cysteinyl-[protein] + uridine(34) in tRNA + AH2 + ATP = 2-thiouridine(34) in tRNA + L-cysteinyl-[protein] + A + AMP + diphosphate + H(+). Functionally, catalyzes the 2-thiolation of uridine at the wobble position (U34) of tRNA, leading to the formation of s(2)U34. This chain is tRNA-specific 2-thiouridylase MnmA, found in Clavibacter sepedonicus (Clavibacter michiganensis subsp. sepedonicus).